Here is a 176-residue protein sequence, read N- to C-terminus: Ribosome rescue factor SmrB (176 aa).

Residues 97 to 172 (LDMHGMTQQE…GNGALLVLID (76 aa)) enclose the Smr domain.

It belongs to the SmrB family. As to quaternary structure, associates with collided ribosomes, but not with correctly translating polysomes.

Functionally, acts as a ribosome collision sensor. Detects stalled/collided disomes (pairs of ribosomes where the leading ribosome is stalled and a second ribosome has collided with it) and endonucleolytically cleaves mRNA at the 5' boundary of the stalled ribosome. Stalled/collided disomes form a new interface (primarily via the 30S subunits) that binds SmrB. Cleaved mRNA becomes available for tmRNA ligation, leading to ribosomal subunit dissociation and rescue of stalled ribosomes. The protein is Ribosome rescue factor SmrB of Photobacterium profundum (strain SS9).